The following is a 390-amino-acid chain: MNLHEYQAKELLSRYGLPVQQGILAKSPEEAAAAYDKLGGKFAVVKAQVHAGGRGKAGGVKVVKSREEAAEVAKTLIGTNLVTYQTDAAGQPVNSVLVCEDMYPVQRELYLGAVVDRGSQRVVFMVSTEGGVEIEKVAEETPEKIIKIEVDPLVGMQPFQARDAAFALGLSGAQVAAFSKLMLGSYQAFIENDFALFEVNPLALRENGELACVDGKINLDSNALYRHPELLAQRDKSQENEREVKASEFDLNYVALEGNIGCMVNGAGLAMATMDIIKLKGGQPANFLDVGGGATKERVIEAFKLILADTSVQGVLINIFGGIVRCDMIAEAIIAAVKEVNVTVPVVVRLEGNNAELGAKILDESGLKLTSAQGLNDAAEKIVAAVKAVA.

Positions 9–245 constitute an ATP-grasp domain; sequence KELLSRYGLP…KSQENEREVK (237 aa). Residues Lys46, 53–55, Glu100, Tyr103, and Glu108 each bind ATP; that span reads GRG. Mg(2+)-binding residues include Asn200 and Asp214. Substrate is bound by residues Asn265 and 322 to 324; that span reads GIV.

Belongs to the succinate/malate CoA ligase beta subunit family. In terms of assembly, heterotetramer of two alpha and two beta subunits. Mg(2+) is required as a cofactor.

The catalysed reaction is succinate + ATP + CoA = succinyl-CoA + ADP + phosphate. The enzyme catalyses GTP + succinate + CoA = succinyl-CoA + GDP + phosphate. It functions in the pathway carbohydrate metabolism; tricarboxylic acid cycle; succinate from succinyl-CoA (ligase route): step 1/1. Succinyl-CoA synthetase functions in the citric acid cycle (TCA), coupling the hydrolysis of succinyl-CoA to the synthesis of either ATP or GTP and thus represents the only step of substrate-level phosphorylation in the TCA. The beta subunit provides nucleotide specificity of the enzyme and binds the substrate succinate, while the binding sites for coenzyme A and phosphate are found in the alpha subunit. The polypeptide is Succinate--CoA ligase [ADP-forming] subunit beta (Chromobacterium violaceum (strain ATCC 12472 / DSM 30191 / JCM 1249 / CCUG 213 / NBRC 12614 / NCIMB 9131 / NCTC 9757 / MK)).